Reading from the N-terminus, the 319-residue chain is Ribonuclease Z (319 aa).

7 residues coordinate Zn(2+): H62, H64, D66, H67, H145, D215, and H273. D66 serves as the catalytic Proton acceptor.

The protein belongs to the RNase Z family. As to quaternary structure, homodimer. Zn(2+) serves as cofactor.

It carries out the reaction Endonucleolytic cleavage of RNA, removing extra 3' nucleotides from tRNA precursor, generating 3' termini of tRNAs. A 3'-hydroxy group is left at the tRNA terminus and a 5'-phosphoryl group is left at the trailer molecule.. Zinc phosphodiesterase, which displays some tRNA 3'-processing endonuclease activity. Probably involved in tRNA maturation, by removing a 3'-trailer from precursor tRNA. This is Ribonuclease Z from Borrelia garinii subsp. bavariensis (strain ATCC BAA-2496 / DSM 23469 / PBi) (Borreliella bavariensis).